A 301-amino-acid chain; its full sequence is Homoserine O-acetyltransferase (301 aa).

Cys-142 acts as the Acyl-thioester intermediate in catalysis. Residues Lys-163 and Ser-192 each coordinate substrate. Catalysis depends on His-235, which acts as the Proton acceptor. The active site involves Glu-237. Arg-249 is a substrate binding site.

Belongs to the MetA family.

Its subcellular location is the cytoplasm. The enzyme catalyses L-homoserine + acetyl-CoA = O-acetyl-L-homoserine + CoA. Its pathway is amino-acid biosynthesis; L-methionine biosynthesis via de novo pathway; O-acetyl-L-homoserine from L-homoserine: step 1/1. Its function is as follows. Transfers an acetyl group from acetyl-CoA to L-homoserine, forming acetyl-L-homoserine. This chain is Homoserine O-acetyltransferase, found in Succinatimonas hippei (strain DSM 22608 / JCM 16073 / KCTC 15190 / YIT 12066).